Here is a 302-residue protein sequence, read N- to C-terminus: Dioxygenase olcK (302 aa).

His-136, Asp-138, and His-213 together coordinate Fe cation.

It belongs to the PhyH family. Homodimer. Fe cation is required as a cofactor.

The protein localises to the peroxisome matrix. The protein operates within secondary metabolite biosynthesis; terpenoid biosynthesis. Functionally, dioxygenase; part of the gene cluster that mediates the biosynthesis of 15-deoxyoxalicine B. The first step of the pathway is the synthesis of nicotinyl-CoA from nicotinic acid by the nicotinic acid-CoA ligase olcI. Nicotinyl-CoA is then a substrate of polyketide synthase olcA to produce 4-hydroxy-6-(3-pyridinyl)-2H-pyran-2-one (HPPO) which is further prenylated by the polyprenyl transferase olcH to yield geranylgeranyl-HPPO. Geranylgeranyl pyrophosphate is provided by the cluster-specific geranylgeranyl pyrophosphate synthase olcC. The FAD-dependent monooxygenase olcE catalyzes the epoxidation of geranylgeranyl-HPPO and the terpene cyclase olcD catalyzes the cyclization of the terpenoid component, resulting in the formation of the tricyclic terpene moiety seen in predecaturin E. The cytochrome P450 monooxygenase then catalyzes the allylic oxidation of predecaturin E, which is followed by spirocylization with concomitant loss of one molecule of water to form decaturin E. Decaturin E is the substrate of the cytochrome P450 monooxygenase olcJ which hydroxylates it at the C-29 position to form decaturin F. The short-chain dehydrogenase/reductase olcF may catalyze the oxidation of decaturin F to generate the 29-hydroxyl-27-one intermediate, and subsequent hemiacetal formation probably leads to the formation of decaturin C. The dioxygenase olcK may be a peroxisomal enzyme that catalyzes the hydroxylation of decaturin C into decaturin A once decaturin C is shuttled into the peroxisome by the MFS transporter olcL. Finally the cytochrome P450 monooxygenase olcB catalyzes the oxidative rearrangement to yield 15-deoxyoxalicine B. In the absence of olcJ, decaturin E may be shunted to a pathway in which it is oxidized to a ketone, possibly by olcF, to form decaturin D, which undergoes further allylic oxidation to yield decaturin G. Moreover, in the absence of oclK or oclL, oclB can convert decaturin C into 15-deoxyoxalicine A. The protein is Dioxygenase olcK of Penicillium canescens.